The sequence spans 363 residues: UDP-N-acetylglucosamine--N-acetylmuramyl-(pentapeptide) pyrophosphoryl-undecaprenol N-acetylglucosamine transferase (363 aa).

Residues 14–16 (TGG), Arg171, Ser200, and Gln290 each bind UDP-N-acetyl-alpha-D-glucosamine.

This sequence belongs to the glycosyltransferase 28 family. MurG subfamily.

Its subcellular location is the cell inner membrane. It carries out the reaction di-trans,octa-cis-undecaprenyl diphospho-N-acetyl-alpha-D-muramoyl-L-alanyl-D-glutamyl-meso-2,6-diaminopimeloyl-D-alanyl-D-alanine + UDP-N-acetyl-alpha-D-glucosamine = di-trans,octa-cis-undecaprenyl diphospho-[N-acetyl-alpha-D-glucosaminyl-(1-&gt;4)]-N-acetyl-alpha-D-muramoyl-L-alanyl-D-glutamyl-meso-2,6-diaminopimeloyl-D-alanyl-D-alanine + UDP + H(+). The protein operates within cell wall biogenesis; peptidoglycan biosynthesis. Functionally, cell wall formation. Catalyzes the transfer of a GlcNAc subunit on undecaprenyl-pyrophosphoryl-MurNAc-pentapeptide (lipid intermediate I) to form undecaprenyl-pyrophosphoryl-MurNAc-(pentapeptide)GlcNAc (lipid intermediate II). In Borreliella burgdorferi (strain ATCC 35210 / DSM 4680 / CIP 102532 / B31) (Borrelia burgdorferi), this protein is UDP-N-acetylglucosamine--N-acetylmuramyl-(pentapeptide) pyrophosphoryl-undecaprenol N-acetylglucosamine transferase.